The following is a 1306-amino-acid chain: Kinesin-like protein KIN-14L (1306 aa).

The 315-residue stretch at 142-456 folds into the Kinesin motor domain; sequence NVKVFCRSRP…LSFSARAKNA (315 aa). ATP is bound at residue 223 to 230; that stretch reads GQSRSGKT. Coiled-coil stretches lie at residues 466–507 and 540–595; these read IKKW…ANDQ and HRIE…ALNS. Polar residues-rich tracts occupy residues 592–611 and 660–677; these read ALNS…SVIS and LGSS…TNAQ. Disordered regions lie at residues 592–627, 657–710, and 849–881; these read ALNS…SVTK, KSGL…SGAI, and KSHT…RTSL. Over residues 855–867 the composition is skewed to low complexity; that stretch reads SRSSSRGSSPGRS.

It belongs to the TRAFAC class myosin-kinesin ATPase superfamily. Kinesin family. KIN-14 subfamily.

The protein is Kinesin-like protein KIN-14L of Oryza sativa subsp. japonica (Rice).